The primary structure comprises 88 residues: Apolipoprotein C-I (88 aa).

The signal sequence occupies residues 1 to 26; the sequence is MRLILSLPVLVVVLSMVLEGPAPAQA.

Belongs to the apolipoprotein C1 family.

The protein resides in the secreted. Its function is as follows. Inhibitor of lipoprotein binding to the low density lipoprotein (LDL) receptor, LDL receptor-related protein, and very low density lipoprotein (VLDL) receptor. Associates with high density lipoproteins (HDL) and the triacylglycerol-rich lipoproteins in the plasma and makes up about 10% of the protein of the VLDL and 2% of that of HDL. Appears to interfere directly with fatty acid uptake and is also the major plasma inhibitor of cholesteryl ester transfer protein (CETP). Binds free fatty acids and reduces their intracellular esterification. Modulates the interaction of APOE with beta-migrating VLDL and inhibits binding of beta-VLDL to the LDL receptor-related protein. This chain is Apolipoprotein C-I (APOC1), found in Lycaon pictus (African wild dog).